The following is a 225-amino-acid chain: UPF0758 protein Shew_3481 (225 aa).

Residues 102-224 (ILSDPDLTRD…IVSFAERGWI (123 aa)) enclose the MPN domain. Zn(2+) contacts are provided by H173, H175, and D186. Positions 173–186 (HNHPSGGAEPSHAD) match the JAMM motif motif.

This sequence belongs to the UPF0758 family.

The polypeptide is UPF0758 protein Shew_3481 (Shewanella loihica (strain ATCC BAA-1088 / PV-4)).